The sequence spans 254 residues: tRNA (guanine-N(1)-)-methyltransferase (254 aa).

Residues G121 and 141-146 contribute to the S-adenosyl-L-methionine site; that span reads LGDYVL.

The protein belongs to the RNA methyltransferase TrmD family. As to quaternary structure, homodimer.

It localises to the cytoplasm. It carries out the reaction guanosine(37) in tRNA + S-adenosyl-L-methionine = N(1)-methylguanosine(37) in tRNA + S-adenosyl-L-homocysteine + H(+). Its function is as follows. Specifically methylates guanosine-37 in various tRNAs. This is tRNA (guanine-N(1)-)-methyltransferase from Psychrobacter cryohalolentis (strain ATCC BAA-1226 / DSM 17306 / VKM B-2378 / K5).